A 160-amino-acid polypeptide reads, in one-letter code: Major pollen allergen Bet v 1-M/N (160 aa).

Residues K55, Y82, Y84, and N101 each contribute to the brassinolide site.

This sequence belongs to the BetVI family.

The protein resides in the cytoplasm. May be a general steroid carrier protein. The protein is Major pollen allergen Bet v 1-M/N (BETV1M) of Betula pendula (European white birch).